Reading from the N-terminus, the 61-residue chain is Large ribosomal subunit protein uL29 (61 aa).

The protein belongs to the universal ribosomal protein uL29 family.

The sequence is that of Large ribosomal subunit protein uL29 from Stenotrophomonas maltophilia (strain K279a).